Consider the following 287-residue polypeptide: Fructose-1,6-bisphosphatase class 1 (287 aa).

Mg(2+) contacts are provided by Glu-67, Asp-86, Leu-88, and Asp-89. Residues 89-92, Tyr-195, and Lys-226 contribute to the substrate site; that span reads DGSS. Glu-232 is a binding site for Mg(2+).

Belongs to the FBPase class 1 family. Homotetramer. Mg(2+) serves as cofactor.

It localises to the cytoplasm. It carries out the reaction beta-D-fructose 1,6-bisphosphate + H2O = beta-D-fructose 6-phosphate + phosphate. It functions in the pathway carbohydrate biosynthesis; gluconeogenesis. The protein is Fructose-1,6-bisphosphatase class 1 of Campylobacter concisus (strain 13826).